The sequence spans 392 residues: Chorismate synthase (392 aa).

Arginine 39 and arginine 45 together coordinate NADP(+). FMN-binding positions include 131–133 (RSS), 255–256 (NA), glycine 300, 315–319 (KPIPT), and arginine 341.

This sequence belongs to the chorismate synthase family. In terms of assembly, homotetramer. Requires FMNH2 as cofactor.

The enzyme catalyses 5-O-(1-carboxyvinyl)-3-phosphoshikimate = chorismate + phosphate. It participates in metabolic intermediate biosynthesis; chorismate biosynthesis; chorismate from D-erythrose 4-phosphate and phosphoenolpyruvate: step 7/7. Its function is as follows. Catalyzes the anti-1,4-elimination of the C-3 phosphate and the C-6 proR hydrogen from 5-enolpyruvylshikimate-3-phosphate (EPSP) to yield chorismate, which is the branch point compound that serves as the starting substrate for the three terminal pathways of aromatic amino acid biosynthesis. This reaction introduces a second double bond into the aromatic ring system. The chain is Chorismate synthase from Leuconostoc citreum (strain KM20).